Reading from the N-terminus, the 626-residue chain is MAFVSIAPLASRCCVHKSFVSSREVKPLCRTIPTLGRCRRGKTVTPSISMCWTATVLDDGVQRRIANHHSNLWDDSFIQSLSTPYGETSYLERADKLIGEVKEIINSISVEDGELITPLNDLIQRLSIVDNIERLGIDRHFKNEIKSALDYVYSYWNEKGIGCGRESVITDLNSTALGLRTLRLHGYPVSSDVFEQFKEQNGQFACSAIQTEGEIKKVLNLFRASLIAFPGEKVMEEAEIFSTIYLKEALLKIPVCSLSREIAYVLEYGWHMNLPRLEARNYIDVFGQDPIYLTLNMRTQKLIELAKLEFNIFHSLQQEELKHVSRWWKDSGFSQMAYARHRHVEFYTLASCIAIDPQHSSFRLGFTKITYLGTVLDDIYDTFGTMDELELFTAAVKRWHPSAAEGLPEYMKGVYMMFYETVNEMAREAEKCQGRDTLNYARQALEAYIDSYMKEAKWISSGFLPTFEEYLDNGKVSFGYRIGTLQPILTLGIPFPHHILQEIDFPSRLNDLAGSILRLKGDIHSYQAERSRGEESSGISCYMKDNPESTEEDAVTYINAMINRLLKELNWEFLKPHSNVPITSKKHAFDILRAFYHLYKDRDGFSVTRNEIRNLVMTTVIEHVPL.

The transit peptide at 1–21 directs the protein to the chloroplast; it reads MAFVSIAPLASRCCVHKSFVS. The Mg(2+) site is built by D377, D381, and E529. The DDXXD motif motif lies at 377 to 381; that stretch reads DDIYD.

The protein belongs to the terpene synthase family. Tpsd subfamily. Requires Mg(2+) as cofactor. Mn(2+) serves as cofactor.

The protein localises to the plastid. It is found in the chloroplast. It carries out the reaction (2E)-geranyl diphosphate + H2O = (R)-linalool + diphosphate. Its pathway is terpene metabolism; oleoresin biosynthesis. Its function is as follows. Terpene synthase (mono-TPS) involved in the biosynthesis of monoterpene natural products included in conifer oleoresin secretions and volatile emissions; these compounds contribute to biotic and abiotic stress defense against herbivores and pathogens. Catalyzes the conversion of (2E)-geranyl diphosphate (GPP) to (R)-linalool. This Picea sitchensis (Sitka spruce) protein is (R)-linalool synthase 2, chloroplastic.